Reading from the N-terminus, the 504-residue chain is Maturase K (504 aa).

The protein belongs to the intron maturase 2 family. MatK subfamily.

It localises to the plastid. It is found in the chloroplast. In terms of biological role, usually encoded in the trnK tRNA gene intron. Probably assists in splicing its own and other chloroplast group II introns. In Cardamine amara (Large bitter-cress), this protein is Maturase K.